The following is a 261-amino-acid chain: Cytochrome c oxidase subunit 3 (261 aa).

Over 1–15 the chain is Mitochondrial matrix; the sequence is MTHQTHAYHMVNPSP. A helical membrane pass occupies residues 16–34; it reads WPLTGALSALLMTSGLIMW. The Mitochondrial intermembrane portion of the chain corresponds to 35-40; that stretch reads FHFNST. A helical membrane pass occupies residues 41–66; sequence TLLMLGLTTNMLTMYQWWRDVIREST. At 67-72 the chain is on the mitochondrial matrix side; sequence FQGHHT. A helical membrane pass occupies residues 73-105; it reads PNVQKGLRYGMILFIISEVLFFTGFFWAFYHSS. Residues 106-128 lie on the Mitochondrial intermembrane side of the membrane; sequence LAPTPELGGCWPPTGIHPLNPLE. The helical transmembrane segment at 129 to 152 threads the bilayer; that stretch reads VPLLNTSVLLASGVSITWAHHSLM. The Mitochondrial matrix segment spans residues 153–155; that stretch reads EGN. A helical transmembrane segment spans residues 156–183; that stretch reads RNHMLQALFITIALGVYFTLLQASEYYE. The Mitochondrial intermembrane segment spans residues 184 to 190; it reads APFTISD. A helical transmembrane segment spans residues 191-223; that stretch reads GVYGSTFFVATGFHGLHVIIGSTFLIVCFFRQL. Topologically, residues 224-232 are mitochondrial matrix; that stretch reads KFHFTSNHH. The chain crosses the membrane as a helical span at residues 233-256; it reads FGFEAAAWYWHFVDVVWLFLYVSI. Topologically, residues 257–261 are mitochondrial intermembrane; that stretch reads YWWGS.

Belongs to the cytochrome c oxidase subunit 3 family. In terms of assembly, component of the cytochrome c oxidase (complex IV, CIV), a multisubunit enzyme composed of 14 subunits. The complex is composed of a catalytic core of 3 subunits MT-CO1, MT-CO2 and MT-CO3, encoded in the mitochondrial DNA, and 11 supernumerary subunits COX4I, COX5A, COX5B, COX6A, COX6B, COX6C, COX7A, COX7B, COX7C, COX8 and NDUFA4, which are encoded in the nuclear genome. The complex exists as a monomer or a dimer and forms supercomplexes (SCs) in the inner mitochondrial membrane with NADH-ubiquinone oxidoreductase (complex I, CI) and ubiquinol-cytochrome c oxidoreductase (cytochrome b-c1 complex, complex III, CIII), resulting in different assemblies (supercomplex SCI(1)III(2)IV(1) and megacomplex MCI(2)III(2)IV(2)).

The protein resides in the mitochondrion inner membrane. It carries out the reaction 4 Fe(II)-[cytochrome c] + O2 + 8 H(+)(in) = 4 Fe(III)-[cytochrome c] + 2 H2O + 4 H(+)(out). Functionally, component of the cytochrome c oxidase, the last enzyme in the mitochondrial electron transport chain which drives oxidative phosphorylation. The respiratory chain contains 3 multisubunit complexes succinate dehydrogenase (complex II, CII), ubiquinol-cytochrome c oxidoreductase (cytochrome b-c1 complex, complex III, CIII) and cytochrome c oxidase (complex IV, CIV), that cooperate to transfer electrons derived from NADH and succinate to molecular oxygen, creating an electrochemical gradient over the inner membrane that drives transmembrane transport and the ATP synthase. Cytochrome c oxidase is the component of the respiratory chain that catalyzes the reduction of oxygen to water. Electrons originating from reduced cytochrome c in the intermembrane space (IMS) are transferred via the dinuclear copper A center (CU(A)) of subunit 2 and heme A of subunit 1 to the active site in subunit 1, a binuclear center (BNC) formed by heme A3 and copper B (CU(B)). The BNC reduces molecular oxygen to 2 water molecules using 4 electrons from cytochrome c in the IMS and 4 protons from the mitochondrial matrix. In Antilope cervicapra (Blackbuck), this protein is Cytochrome c oxidase subunit 3 (MT-CO3).